The primary structure comprises 274 residues: Protein bax (274 aa).

The span at 32–64 (TTASQKSHLTKASNKQVSSKQEYSRNSAKSSSL) shows a compositional bias: polar residues. Residues 32–74 (TTASQKSHLTKASNKQVSSKQEYSRNSAKSSSLPDLRKYPSGT) are disordered. An ATP-binding site is contributed by 247–254 (GYSTKGKS).

The polypeptide is Protein bax (bax) (Escherichia coli (strain K12)).